The sequence spans 255 residues: tRNA pseudouridine synthase A (255 aa).

The active-site Nucleophile is Asp53. Position 113 (Tyr113) interacts with substrate.

The protein belongs to the tRNA pseudouridine synthase TruA family. Homodimer.

The enzyme catalyses uridine(38/39/40) in tRNA = pseudouridine(38/39/40) in tRNA. Its function is as follows. Formation of pseudouridine at positions 38, 39 and 40 in the anticodon stem and loop of transfer RNAs. This Acidiphilium cryptum (strain JF-5) protein is tRNA pseudouridine synthase A.